The following is a 425-amino-acid chain: Na(+)/H(+) antiporter NhaA 1 (425 aa).

Helical transmembrane passes span 20 to 40 (AGGV…NSPL), 65 to 85 (PHLW…GLEI), 102 to 122 (LPFI…LAVT), 131 to 151 (GWAI…ALLG), 160 to 180 (LFLT…IALA), 183 to 203 (ASIK…MMAM), 218 to 238 (FVLL…AGVL), 272 to 292 (FLIV…GFSL), 303 to 323 (IAAG…WAAV), 342 to 362 (LSVL…LAFA), and 373 to 393 (LGVI…LRFA).

It belongs to the NhaA Na(+)/H(+) (TC 2.A.33) antiporter family.

It localises to the cell inner membrane. It catalyses the reaction Na(+)(in) + 2 H(+)(out) = Na(+)(out) + 2 H(+)(in). Its function is as follows. Na(+)/H(+) antiporter that extrudes sodium in exchange for external protons. In Novosphingobium aromaticivorans (strain ATCC 700278 / DSM 12444 / CCUG 56034 / CIP 105152 / NBRC 16084 / F199), this protein is Na(+)/H(+) antiporter NhaA 1.